A 465-amino-acid polypeptide reads, in one-letter code: GTPase Der (465 aa).

2 consecutive EngA-type G domains span residues Phe3–Tyr166 and Ile184–Asn358. GTP is bound by residues Gly9 to Ser16, Asp56 to Ile60, Asn118 to Asp121, Gly190 to Ser197, Asp237 to Val241, and Asn302 to Asp305. The 85-residue stretch at Lys359–Glu443 folds into the KH-like domain. The interval Phe446 to Lys465 is disordered.

Belongs to the TRAFAC class TrmE-Era-EngA-EngB-Septin-like GTPase superfamily. EngA (Der) GTPase family. In terms of assembly, associates with the 50S ribosomal subunit.

Functionally, GTPase that plays an essential role in the late steps of ribosome biogenesis. This is GTPase Der from Francisella tularensis subsp. novicida (strain U112).